The following is a 151-amino-acid chain: MSKITKKVEELVKPILERYGFDLVDIEFKKEGKSHFLRVYIDKPGGITIDDCQLVSEELSEKLDIVDPIPFSYYLEVSSPGVDRPLVTDRDFIRNKGKVVDVFLNQPFLNRTRITGELVEKNEKSLILIVDKEKIVIPIENIKKVKLAIRF.

This sequence belongs to the RimP family.

It is found in the cytoplasm. In terms of biological role, required for maturation of 30S ribosomal subunits. The polypeptide is Ribosome maturation factor RimP (Caldicellulosiruptor bescii (strain ATCC BAA-1888 / DSM 6725 / KCTC 15123 / Z-1320) (Anaerocellum thermophilum)).